A 311-amino-acid polypeptide reads, in one-letter code: Syntaxin-111 (311 aa).

The Cytoplasmic portion of the chain corresponds to Met1 to Lys284. Residues Val213–Ala275 form the t-SNARE coiled-coil homology domain. Residues Trp285–Ala305 form a helical; Anchor for type IV membrane protein membrane-spanning segment. Topologically, residues Thr306–Ser311 are vesicular.

Belongs to the syntaxin family. As to expression, expressed in roots and panicles.

Its subcellular location is the cell membrane. It is found in the cytoplasm. In terms of biological role, vesicle trafficking protein that functions in the secretory pathway. The polypeptide is Syntaxin-111 (Oryza sativa subsp. japonica (Rice)).